A 162-amino-acid polypeptide reads, in one-letter code: Transcription elongation factor GreA (162 aa).

Residues 1–28 (MQKEPMLEETYRKLSEELEQLKSVERGV) are a coiled coil.

It belongs to the GreA/GreB family.

Functionally, necessary for efficient RNA polymerase transcription elongation past template-encoded arresting sites. The arresting sites in DNA have the property of trapping a certain fraction of elongating RNA polymerases that pass through, resulting in locked ternary complexes. Cleavage of the nascent transcript by cleavage factors such as GreA or GreB allows the resumption of elongation from the new 3'terminus. GreA releases sequences of 2 to 3 nucleotides. In Sulfurovum sp. (strain NBC37-1), this protein is Transcription elongation factor GreA.